We begin with the raw amino-acid sequence, 761 residues long: NADP-dependent malic enzyme (761 aa).

A malic enzyme region spans residues 1 to 437 (MPGIDKTDRA…QLSARRDPIA (437 aa)). Y49 (proton donor) is an active-site residue. The Proton acceptor role is filled by K104. Residues E146, D147, and D172 each contribute to the a divalent metal cation site. NADP(+)-binding positions include 205–208 (AGAA), N297, and N329. The tract at residues 438-761 (STLQRIVERV…AAIAAYNAGT (324 aa)) is phosphate acetyltransferase.

In the N-terminal section; belongs to the malic enzymes family. It in the C-terminal section; belongs to the phosphate acetyltransferase and butyryltransferase family. Homooctamer. Mg(2+) serves as cofactor. It depends on Mn(2+) as a cofactor.

The enzyme catalyses (S)-malate + NADP(+) = pyruvate + CO2 + NADPH. The catalysed reaction is oxaloacetate + H(+) = pyruvate + CO2. This chain is NADP-dependent malic enzyme (tme), found in Rhizobium meliloti (strain 1021) (Ensifer meliloti).